We begin with the raw amino-acid sequence, 301 residues long: tRNA pseudouridine synthase B (301 aa).

Aspartate 45 functions as the Nucleophile in the catalytic mechanism.

It belongs to the pseudouridine synthase TruB family. Type 1 subfamily.

It carries out the reaction uridine(55) in tRNA = pseudouridine(55) in tRNA. Its function is as follows. Responsible for synthesis of pseudouridine from uracil-55 in the psi GC loop of transfer RNAs. In Streptomyces coelicolor (strain ATCC BAA-471 / A3(2) / M145), this protein is tRNA pseudouridine synthase B.